A 612-amino-acid chain; its full sequence is Vitamin B12 transporter BtuB (612 aa).

The first 20 residues, 1 to 20 (MIKKSLLCTALSVTAFSGWA), serve as a signal peptide directing secretion. A TonB box motif is present at residues 26–33 (DTLVVTAN). A TBDR plug domain is found at 38–152 (PRSAVLAPIT…IGGVVNIITT (115 aa)). Residues Ser-85, Asn-92, and 110-111 (VS) contribute to the cyanocob(III)alamin site. A TBDR beta-barrel domain is found at 155–612 (KPGTELTAGV…EYTLSGSYTF (458 aa)). A run of 3 beta stranded transmembrane segments spans residues 158–165 (TELTAGVG), 169–178 (YQNYDVSTQQ), and 184–195 (TRVTLMGDYAYT). Ca(2+)-binding residues include Asp-199, Gln-211, Asp-213, and Asp-215. 2 consecutive transmembrane segments (beta stranded) span residues 217-227 (FLSKTLYGALE) and 232-248 (DTWS…NRTN). Ca(2+)-binding residues include Tyr-249, Asp-250, and Asp-261. 14 consecutive transmembrane segments (beta stranded) span residues 263 to 277 (RKLY…LRFN), 279 to 296 (ELIQ…KDYN), 309 to 325 (TLDE…NSIV), 328 to 337 (HGNVGAGVDW), 353 to 369 (YDQR…QQLG), 371 to 381 (FTFEGAARSDD), 385 to 400 (FGRH…WEFI), 403 to 417 (YRFI…KAPN), 434 to 443 (QSKQWEGAFE), 449 to 458 (VNWRVSGYRN), 473 to 490 (YFNE…TANF), 494 to 509 (PLAH…SRNA), 517 to 529 (RRSK…QLDW), and 535 to 550 (DWGL…YDTD). Thr-309 serves as a coordination point for cyanocob(III)alamin. Arg-517 contributes to the cyanocob(III)alamin binding site. Tyr-551 contributes to the cyanocob(III)alamin binding site. A run of 3 beta stranded transmembrane segments spans residues 556-570 (PVKM…LAVS), 583-594 (IANRFDKDYETV), and 600-612 (AGRE…SYTF). The short motif at 595-612 (YGYATAGREYTLSGSYTF) is the TonB C-terminal box element.

Belongs to the TonB-dependent receptor family. BtuB (TC 1.B.14.3.1) subfamily.

Its subcellular location is the cell outer membrane. Involved in the active translocation of vitamin B12 (cyanocobalamin) across the outer membrane to the periplasmic space. It derives its energy for transport by interacting with the trans-periplasmic membrane protein TonB. The protein is Vitamin B12 transporter BtuB of Citrobacter freundii.